The primary structure comprises 233 residues: N-(5'-phosphoribosyl)anthranilate isomerase (233 aa).

Belongs to the TrpF family.

The enzyme catalyses N-(5-phospho-beta-D-ribosyl)anthranilate = 1-(2-carboxyphenylamino)-1-deoxy-D-ribulose 5-phosphate. It participates in amino-acid biosynthesis; L-tryptophan biosynthesis; L-tryptophan from chorismate: step 3/5. This is N-(5'-phosphoribosyl)anthranilate isomerase from Ralstonia pickettii (strain 12J).